The sequence spans 755 residues: 1,4-alpha-glucan branching enzyme GlgB (755 aa).

The Nucleophile role is filled by D431. The Proton donor role is filled by E484.

Belongs to the glycosyl hydrolase 13 family. GlgB subfamily. As to quaternary structure, monomer.

It carries out the reaction Transfers a segment of a (1-&gt;4)-alpha-D-glucan chain to a primary hydroxy group in a similar glucan chain.. It functions in the pathway glycan biosynthesis; glycogen biosynthesis. In terms of biological role, catalyzes the formation of the alpha-1,6-glucosidic linkages in glycogen by scission of a 1,4-alpha-linked oligosaccharide from growing alpha-1,4-glucan chains and the subsequent attachment of the oligosaccharide to the alpha-1,6 position. The polypeptide is 1,4-alpha-glucan branching enzyme GlgB (Prochlorococcus marinus (strain NATL2A)).